The primary structure comprises 31 residues: Mu-conotoxin SmIIIA (31 aa).

The propeptide occupies 1–6; it reads PLFDKR. At Q7 the chain carries Pyrrolidone carboxylic acid. 3 disulfides stabilise this stretch: C9–C21, C10–C27, and C16–C28. A Cysteine amide modification is found at C28.

The protein belongs to the conotoxin M superfamily. Post-translationally, smIIIA' is a putative isoform where the N-terminal AA is missing. As to expression, expressed by the venom duct.

The protein resides in the secreted. In terms of biological role, mu-conotoxins block voltage-gated sodium channels (Nav). This toxin blocks rNav1.5/SCN5A (IC(50) is 1.3 uM), rNav1.6/SCN8A (IC(50) is 160 nM), rNav1.7/SCN9A (IC(50) is 1.3 uM), rNav1.1/SCN1A (K(d) is 3.8 nM), rNav1.2/SCN2A (K(d) is 1.3 nM), rNav1.4/SCN4A (K(d) is 0.22 nM), rNav1.6/SCN8A (K(d) is 69 nM), and rNav1.7/SCN9A (K(d) is 260 nM). This toxin is very potent but weakly discriminating among sodium channels. The block of these channels is modified when beta-subunits are coexpressed with alpha subunits. Hence, blocks of channels containing beta-1 and beta-3 subunits are more potent (compared to channels without beta subunits), whereas blocks of channels containing beta-2 and beta-4 subunits are less potent (compared to channels without beta subunits). The chain is Mu-conotoxin SmIIIA from Conus stercusmuscarum (Fly-specked cone).